A 260-amino-acid chain; its full sequence is FAS1 domain-containing protein SELMODRAFT_448915 (260 aa).

Topologically, residues 1–35 (MRRTGRSYKPLLSQLKDHHIPVHPSSRAERAMESR) are cytoplasmic. The chain crosses the membrane as a helical span at residues 36 to 58 (TLLVLLFVGVVTIVSSGLERAAA). Residues 59–198 (QDDTDDGILP…IACHGIDRVL (140 aa)) form the FAS1 domain. Residues 59 to 260 (QDDTDDGILP…SSASRYPVSE (202 aa)) lie on the Extracellular side of the membrane. N-linked (GlcNAc...) asparagine glycosylation is found at N118, N169, N176, N201, N236, and N247. Residues 210 to 260 (PEASPPFGAEQASPAPEALPPGTRSPNNTANPSNRKSNSTRSSASRYPVSE) form a disordered region. A compositionally biased stretch (polar residues) spans 233-254 (RSPNNTANPSNRKSNSTRSSAS).

The protein resides in the membrane. The protein is FAS1 domain-containing protein SELMODRAFT_448915 of Selaginella moellendorffii (Spikemoss).